Consider the following 397-residue polypeptide: B3 domain-containing protein At4g34400 (397 aa).

Residues 14-107 (PRFFTVFVSH…IFEVSIFRGY (94 aa)) constitute a DNA-binding region (TF-B3). The disordered stretch occupies residues 118 to 255 (ELEEEEEDSV…SSYAPDKEDT (138 aa)). Residues 137–160 (TGAKSEMKNTVPEGRDKGKSKVEV) are compositionally biased toward basic and acidic residues. 3 stretches are compositionally biased toward acidic residues: residues 161-186 (VEDSDDDEEEDSVYSESSEETETDTD), 212-227 (SSDDEEDEEEDSDSDY), and 235-246 (DIEENSISEEDS).

Its subcellular location is the nucleus. The polypeptide is B3 domain-containing protein At4g34400 (Arabidopsis thaliana (Mouse-ear cress)).